The chain runs to 209 residues: Phosphoheptose isomerase (209 aa).

An SIS domain is found at 50–209 (IAETFRNGGK…ELVESMMGYA (160 aa)). Residue 65–67 (NGG) participates in substrate binding. Zn(2+) contacts are provided by histidine 74 and glutamate 78. Substrate-binding positions include glutamate 78, 109-110 (ND), 135-137 (STS), serine 140, and glutamine 188. Zn(2+) contacts are provided by glutamine 188 and histidine 196.

Belongs to the SIS family. GmhA subfamily. The cofactor is Zn(2+).

It is found in the cytoplasm. The enzyme catalyses 2 D-sedoheptulose 7-phosphate = D-glycero-alpha-D-manno-heptose 7-phosphate + D-glycero-beta-D-manno-heptose 7-phosphate. It participates in carbohydrate biosynthesis; D-glycero-D-manno-heptose 7-phosphate biosynthesis; D-glycero-alpha-D-manno-heptose 7-phosphate and D-glycero-beta-D-manno-heptose 7-phosphate from sedoheptulose 7-phosphate: step 1/1. Catalyzes the isomerization of sedoheptulose 7-phosphate in D-glycero-D-manno-heptose 7-phosphate. The chain is Phosphoheptose isomerase from Chlorobaculum parvum (strain DSM 263 / NCIMB 8327) (Chlorobium vibrioforme subsp. thiosulfatophilum).